Reading from the N-terminus, the 341-residue chain is Putative MAGE domain-containing protein MAGEA13P (341 aa).

Disordered stretches follow at residues 1–21 (MPHS…APKE) and 78–101 (KATP…GASQ). Residues 87–97 (ESSRSQEKKDP) are compositionally biased toward basic and acidic residues. The MAGE domain maps to 105–304 (LEKKVDELVK…SSFPLLYEEA (200 aa)).

This chain is Putative MAGE domain-containing protein MAGEA13P (MAGEA13P), found in Homo sapiens (Human).